We begin with the raw amino-acid sequence, 248 residues long: Uridylate kinase (248 aa).

11-14 is an ATP binding site; it reads KISG. Position 53 (G53) interacts with UMP. Residues G54 and R58 each contribute to the ATP site. UMP contacts are provided by residues D74 and 135–142; that span reads AGSPYLTT. ATP is bound by residues T162, Y169, and D172.

This sequence belongs to the UMP kinase family. As to quaternary structure, homohexamer.

Its subcellular location is the cytoplasm. The enzyme catalyses UMP + ATP = UDP + ADP. The protein operates within pyrimidine metabolism; CTP biosynthesis via de novo pathway; UDP from UMP (UMPK route): step 1/1. Its activity is regulated as follows. Inhibited by UTP. Functionally, catalyzes the reversible phosphorylation of UMP to UDP. In Chlamydia pneumoniae (Chlamydophila pneumoniae), this protein is Uridylate kinase.